The following is a 523-amino-acid chain: Signal peptide peptidase-like 3 (523 aa).

The first 35 residues, 1–35, serve as a signal peptide directing secretion; it reads MAFPAPSSSSPRRRGRGLAYLLVSVLLLASRVPGA. Topologically, residues 36 to 207 are lumenal; sequence AGADSEFEDG…EKPSFDGAIP (172 aa). Residues 110-182 form the PA domain; sequence SAPLASSIAV…SQSAGRKILS (73 aa). N-linked (GlcNAc...) asparagine glycosylation is present at asparagine 159. The chain crosses the membrane as a helical span at residues 208 to 228; it reads FLWLMAVGSVACASVWSFVVV. Topologically, residues 229 to 254 are cytoplasmic; sequence GDEDKNAPTLGGEEAADSEIVELQTK. Residues 255–272 form a helical membrane-spanning segment; that stretch reads TALVFIVTASLVLLFLFF. The Lumenal portion of the chain corresponds to 273–275; the sequence is FKS. The helical transmembrane segment at 276–298 threads the bilayer; the sequence is TWSAWLLVVLFCLSGLQGLHYVA. Topologically, residues 299–321 are cytoplasmic; that stretch reads STLIVRTCDRCREAKVALPVLGN. The helical transmembrane segment at 322–342 threads the bilayer; the sequence is VTVVTLVILPLALIFVVVWAV. The Lumenal portion of the chain corresponds to 343-347; sequence HQNSP. The chain crosses the membrane as a helical span at residues 348-368; the sequence is FAWVGQDLMGICMMILVLQVV. The Cytoplasmic segment spans residues 369–377; that stretch reads HLPNIKVAT. Residues 378 to 398 form a helical membrane-spanning segment; sequence ALLVSAFMYDIFWVFISPFIF. Aspartate 387 is an active-site residue. At 399–430 the chain is on the lumenal side; sequence KKSVMITVARGSDEGPSLPMVLKMPKEFDTWN. The helical transmembrane segment at 431-451 threads the bilayer; it reads GYDMIGFGDILFPGLLVAFSF. Residue aspartate 439 is part of the active site. The Cytoplasmic portion of the chain corresponds to 452-465; it reads RYDRANGKDLTDGY. The chain crosses the membrane as a helical span at residues 466–486; sequence FLCLMIGYAFGLSCTYVGLYL. Residues 487–489 are Lumenal-facing; sequence MKS. A helical membrane pass occupies residues 490–510; the sequence is GQPALLYLVPSTLGTIVTLGA. The PAL motif lies at 492-494; that stretch reads PAL. Residues 511 to 523 lie on the Cytoplasmic side of the membrane; it reads KRGELSQLWNAKV.

This sequence belongs to the peptidase A22B family. In terms of processing, glycosylated.

It is found in the endosome membrane. Its function is as follows. Intramembrane-cleaving aspartic protease (I-CLiP) that cleaves type II membrane signal peptides in the hydrophobic plane of the membrane. This chain is Signal peptide peptidase-like 3 (SPPL3), found in Oryza sativa subsp. japonica (Rice).